A 261-amino-acid polypeptide reads, in one-letter code: Ribonuclease PH (261 aa).

Phosphate-binding positions include R87 and 125–127; that span reads GTR.

It belongs to the RNase PH family. Homohexameric ring arranged as a trimer of dimers.

It catalyses the reaction tRNA(n+1) + phosphate = tRNA(n) + a ribonucleoside 5'-diphosphate. Functionally, phosphorolytic 3'-5' exoribonuclease that plays an important role in tRNA 3'-end maturation. Removes nucleotide residues following the 3'-CCA terminus of tRNAs; can also add nucleotides to the ends of RNA molecules by using nucleoside diphosphates as substrates, but this may not be physiologically important. Probably plays a role in initiation of 16S rRNA degradation (leading to ribosome degradation) during starvation. The polypeptide is Ribonuclease PH (Desulforudis audaxviator (strain MP104C)).